We begin with the raw amino-acid sequence, 595 residues long: Fructan 1-exohydrolase (595 aa).

Residues 1 to 20 form the signal peptide; that stretch reads MAQAWAFLLPLLVLGSYVTS. The active site involves Asp74. N-linked (GlcNAc...) asparagine glycans are attached at residues Asn167, Asn235, and Asn247. The cysteines at positions 445 and 491 are disulfide-linked. Asn566 is a glycosylation site (N-linked (GlcNAc...) asparagine).

It belongs to the glycosyl hydrolase 32 family.

It carries out the reaction Hydrolysis of terminal, non-reducing (2-&gt;1)-linked beta-D-fructofuranose residues in fructans.. Inhibited by sucrose. Hydrolyzes inulin-type beta-(2,1)-fructans. May play a role as a beta-(2,1)-trimmer during graminan biosynthesis. The protein is Fructan 1-exohydrolase of Aegilops speltoides (Goatgrass).